A 235-amino-acid polypeptide reads, in one-letter code: Large ribosomal subunit protein bL25 (235 aa).

The segment at 201 to 235 (PVAEAKGKGKAAKPAATAKPAAAAAKPAAKPKAKK) is disordered. Over residues 212–228 (AKPAATAKPAAAAAKPA) the composition is skewed to low complexity.

The protein belongs to the bacterial ribosomal protein bL25 family. CTC subfamily. As to quaternary structure, part of the 50S ribosomal subunit; part of the 5S rRNA/L5/L18/L25 subcomplex. Contacts the 5S rRNA. Binds to the 5S rRNA independently of L5 and L18.

Functionally, this is one of the proteins that binds to the 5S RNA in the ribosome where it forms part of the central protuberance. This is Large ribosomal subunit protein bL25 from Verminephrobacter eiseniae (strain EF01-2).